Here is a 453-residue protein sequence, read N- to C-terminus: Bifunctional protein GlmU (453 aa).

Residues 1 to 226 are pyrophosphorylase; it reads MVAVAILAAG…YLEITGINDR (226 aa). Residues 7–10, Lys-21, Gln-73, and 78–79 contribute to the UDP-N-acetyl-alpha-D-glucosamine site; these read LAAG and GT. Asp-103 provides a ligand contact to Mg(2+). UDP-N-acetyl-alpha-D-glucosamine-binding residues include Gly-140, Glu-155, Asn-170, and Asn-224. Asn-224 is a Mg(2+) binding site. The segment at 227-247 is linker; that stretch reads KQLAMANGILQNRVKDHWMAQ. The tract at residues 248–453 is N-acetyltransferase; the sequence is GVTLIDPDSI…EWKKTIESKK (206 aa). Positions 329 and 347 each coordinate UDP-N-acetyl-alpha-D-glucosamine. His-359 acts as the Proton acceptor in catalysis. 2 residues coordinate UDP-N-acetyl-alpha-D-glucosamine: Tyr-362 and Asn-373. Acetyl-CoA contacts are provided by residues Ala-376, 382-383, Ala-419, and Arg-436; that span reads NY.

The protein in the N-terminal section; belongs to the N-acetylglucosamine-1-phosphate uridyltransferase family. It in the C-terminal section; belongs to the transferase hexapeptide repeat family. As to quaternary structure, homotrimer. Mg(2+) is required as a cofactor.

It localises to the cytoplasm. The catalysed reaction is alpha-D-glucosamine 1-phosphate + acetyl-CoA = N-acetyl-alpha-D-glucosamine 1-phosphate + CoA + H(+). The enzyme catalyses N-acetyl-alpha-D-glucosamine 1-phosphate + UTP + H(+) = UDP-N-acetyl-alpha-D-glucosamine + diphosphate. The protein operates within nucleotide-sugar biosynthesis; UDP-N-acetyl-alpha-D-glucosamine biosynthesis; N-acetyl-alpha-D-glucosamine 1-phosphate from alpha-D-glucosamine 6-phosphate (route II): step 2/2. Its pathway is nucleotide-sugar biosynthesis; UDP-N-acetyl-alpha-D-glucosamine biosynthesis; UDP-N-acetyl-alpha-D-glucosamine from N-acetyl-alpha-D-glucosamine 1-phosphate: step 1/1. It functions in the pathway bacterial outer membrane biogenesis; LPS lipid A biosynthesis. In terms of biological role, catalyzes the last two sequential reactions in the de novo biosynthetic pathway for UDP-N-acetylglucosamine (UDP-GlcNAc). The C-terminal domain catalyzes the transfer of acetyl group from acetyl coenzyme A to glucosamine-1-phosphate (GlcN-1-P) to produce N-acetylglucosamine-1-phosphate (GlcNAc-1-P), which is converted into UDP-GlcNAc by the transfer of uridine 5-monophosphate (from uridine 5-triphosphate), a reaction catalyzed by the N-terminal domain. This is Bifunctional protein GlmU from Rippkaea orientalis (strain PCC 8801 / RF-1) (Cyanothece sp. (strain PCC 8801)).